Reading from the N-terminus, the 468-residue chain is ATP synthase subunit beta (468 aa).

An ATP-binding site is contributed by 153–160; it reads GGAGVGKT.

The protein belongs to the ATPase alpha/beta chains family. As to quaternary structure, F-type ATPases have 2 components, CF(1) - the catalytic core - and CF(0) - the membrane proton channel. CF(1) has five subunits: alpha(3), beta(3), gamma(1), delta(1), epsilon(1). CF(0) has three main subunits: a(1), b(2) and c(9-12). The alpha and beta chains form an alternating ring which encloses part of the gamma chain. CF(1) is attached to CF(0) by a central stalk formed by the gamma and epsilon chains, while a peripheral stalk is formed by the delta and b chains.

The protein localises to the cell membrane. The catalysed reaction is ATP + H2O + 4 H(+)(in) = ADP + phosphate + 5 H(+)(out). Its function is as follows. Produces ATP from ADP in the presence of a proton gradient across the membrane. The catalytic sites are hosted primarily by the beta subunits. This Ligilactobacillus salivarius (strain UCC118) (Lactobacillus salivarius) protein is ATP synthase subunit beta.